The sequence spans 110 residues: U1-lycotoxin-Ls1ii (110 aa).

The first 20 residues, 1-20 (MKFVLLFGVLLVTLFSYSSA), serve as a signal peptide directing secretion. A propeptide spanning residues 21-44 (EMLDDFDQADEDELLSLIEKEEAR) is cleaved from the precursor. Cystine bridges form between C47-C62, C54-C71, C61-C89, and C73-C87.

Belongs to the neurotoxin 19 (CSTX) family. 03 subfamily. In terms of tissue distribution, expressed by the venom gland.

The protein resides in the secreted. The chain is U1-lycotoxin-Ls1ii from Lycosa singoriensis (Wolf spider).